A 119-amino-acid polypeptide reads, in one-letter code: Gibberellin-regulated protein 9 (119 aa).

The N-terminal stretch at 1-24 (MKKMNVVAFVTLIISFLLLSQVLA) is a signal peptide.

It belongs to the GASA family. In terms of processing, six disulfide bonds may be present.

Its subcellular location is the secreted. Its function is as follows. Gibberellin-regulated protein that may function in hormonal controlled steps of development such as seed germination, flowering and seed maturation. This chain is Gibberellin-regulated protein 9 (GASA9), found in Arabidopsis thaliana (Mouse-ear cress).